The chain runs to 265 residues: Tryptophan synthase alpha chain (265 aa).

Active-site proton acceptor residues include Glu49 and Asp60.

It belongs to the TrpA family. As to quaternary structure, tetramer of two alpha and two beta chains.

The catalysed reaction is (1S,2R)-1-C-(indol-3-yl)glycerol 3-phosphate + L-serine = D-glyceraldehyde 3-phosphate + L-tryptophan + H2O. The protein operates within amino-acid biosynthesis; L-tryptophan biosynthesis; L-tryptophan from chorismate: step 5/5. The alpha subunit is responsible for the aldol cleavage of indoleglycerol phosphate to indole and glyceraldehyde 3-phosphate. This chain is Tryptophan synthase alpha chain, found in Polynucleobacter asymbioticus (strain DSM 18221 / CIP 109841 / QLW-P1DMWA-1) (Polynucleobacter necessarius subsp. asymbioticus).